Reading from the N-terminus, the 206-residue chain is Large ribosomal subunit protein uL4 (206 aa).

Residues 47–94 (NRAQKGRSEIAKSTRKPFRQKGTGNARAGMASSPLWRGGGKIFPNSPD) are disordered.

This sequence belongs to the universal ribosomal protein uL4 family. As to quaternary structure, part of the 50S ribosomal subunit.

Its function is as follows. One of the primary rRNA binding proteins, this protein initially binds near the 5'-end of the 23S rRNA. It is important during the early stages of 50S assembly. It makes multiple contacts with different domains of the 23S rRNA in the assembled 50S subunit and ribosome. Functionally, forms part of the polypeptide exit tunnel. This is Large ribosomal subunit protein uL4 from Azoarcus sp. (strain BH72).